Consider the following 143-residue polypeptide: Putative pre-16S rRNA nuclease (143 aa).

Belongs to the YqgF nuclease family.

Its subcellular location is the cytoplasm. Its function is as follows. Could be a nuclease involved in processing of the 5'-end of pre-16S rRNA. The sequence is that of Putative pre-16S rRNA nuclease from Mycoplasma capricolum subsp. capricolum (strain California kid / ATCC 27343 / NCTC 10154).